A 417-amino-acid polypeptide reads, in one-letter code: Glutamyl-tRNA reductase (417 aa).

Residues 49 to 52 (TCNR), Ser-109, 114 to 116 (ESQ), and Gln-120 contribute to the substrate site. The active-site Nucleophile is the Cys-50. 189–194 (GLGEIG) contributes to the NADP(+) binding site.

This sequence belongs to the glutamyl-tRNA reductase family. As to quaternary structure, homodimer.

The enzyme catalyses (S)-4-amino-5-oxopentanoate + tRNA(Glu) + NADP(+) = L-glutamyl-tRNA(Glu) + NADPH + H(+). Its pathway is porphyrin-containing compound metabolism; protoporphyrin-IX biosynthesis; 5-aminolevulinate from L-glutamyl-tRNA(Glu): step 1/2. Catalyzes the NADPH-dependent reduction of glutamyl-tRNA(Glu) to glutamate 1-semialdehyde (GSA). This is Glutamyl-tRNA reductase from Streptococcus sanguinis (strain SK36).